The sequence spans 602 residues: Elongation factor 4 (602 aa).

The region spanning 2 to 184 (KHIRNFSIIA…AIVAKVPAPR (183 aa)) is the tr-type G domain. Residues 14–19 (DHGKST) and 131–134 (NKMD) contribute to the GTP site.

It belongs to the TRAFAC class translation factor GTPase superfamily. Classic translation factor GTPase family. LepA subfamily.

The protein resides in the cell inner membrane. The catalysed reaction is GTP + H2O = GDP + phosphate + H(+). Required for accurate and efficient protein synthesis under certain stress conditions. May act as a fidelity factor of the translation reaction, by catalyzing a one-codon backward translocation of tRNAs on improperly translocated ribosomes. Back-translocation proceeds from a post-translocation (POST) complex to a pre-translocation (PRE) complex, thus giving elongation factor G a second chance to translocate the tRNAs correctly. Binds to ribosomes in a GTP-dependent manner. This Verminephrobacter eiseniae (strain EF01-2) protein is Elongation factor 4.